The chain runs to 386 residues: Oxytocin receptor (386 aa).

Residues 1 to 31 are disordered; the sequence is MEGVLAANWSAEAVNSSAAPPEAEGNRTAGP. Topologically, residues 1–38 are extracellular; the sequence is MEGVLAANWSAEAVNSSAAPPEAEGNRTAGPPQRNEAL. N-linked (GlcNAc...) asparagine glycosylation is found at N8, N15, and N26. Residues 39–63 traverse the membrane as a helical segment; that stretch reads ARVEVAVLCLILFLALSGNACVLLA. The Cytoplasmic segment spans residues 64-74; sequence LRTTRHKHSRL. The chain crosses the membrane as a helical span at residues 75-97; sequence FFFMKHLSIADLVVAVFQVLPQL. Residues 98-113 are Extracellular-facing; it reads LWDITFRFYGPDLLCR. C112 and C187 are oxidised to a cystine. The helical transmembrane segment at 114 to 135 threads the bilayer; sequence LVKYLQVVGMFASTYLLLLMSL. Residues 136–154 lie on the Cytoplasmic side of the membrane; it reads DRCLAICQPLRALRRPADR. The helical transmembrane segment at 155-175 threads the bilayer; the sequence is LAVLATWLGCLVASAPQVHIF. At 176–202 the chain is on the extracellular side; the sequence is SLREVADGVFDCWAVFIQPWGPKAYIT. The chain crosses the membrane as a helical span at residues 203 to 225; that stretch reads WITLAVYIVPVIVLAACYGLISF. Residues 226 to 277 lie on the Cytoplasmic side of the membrane; sequence KIWQNLRLKTAAEAAEAIAGTEGAAAGSRGRAALARVSSVKLISKAKIRTVK. The chain crosses the membrane as a helical span at residues 278–296; sequence MTFIIVLAFIVCWTPFFFV. Topologically, residues 297 to 311 are extracellular; that stretch reads QMWSVWDADAPKEAS. Residues 312-334 traverse the membrane as a helical segment; that stretch reads AFIIAMLLASLNSCCNPWIYMLF. Topologically, residues 335–386 are cytoplasmic; the sequence is TGHLFHELVQRFLCCSSSHLKTSRPGETSVSKKSNSSTFVLSQHSSSQKSCS. Residues 355-375 are compositionally biased toward polar residues; the sequence is KTSRPGETSVSKKSNSSTFVL. Residues 355-386 form a disordered region; it reads KTSRPGETSVSKKSNSSTFVLSQHSSSQKSCS. Residues S368 and S370 each carry the phosphoserine modification. Over residues 376-386 the composition is skewed to low complexity; that stretch reads SQHSSSQKSCS.

This sequence belongs to the G-protein coupled receptor 1 family. Vasopressin/oxytocin receptor subfamily.

It is found in the cell membrane. Its function is as follows. Receptor for oxytocin. The activity of this receptor is mediated by G proteins which activate a phosphatidylinositol-calcium second messenger system. The protein is Oxytocin receptor (OXTR) of Sus scrofa (Pig).